A 272-amino-acid chain; its full sequence is Regulatory protein RecX (272 aa).

It belongs to the RecX family.

It is found in the cytoplasm. In terms of biological role, modulates RecA activity. The polypeptide is Regulatory protein RecX (Staphylococcus saprophyticus subsp. saprophyticus (strain ATCC 15305 / DSM 20229 / NCIMB 8711 / NCTC 7292 / S-41)).